Here is a 113-residue protein sequence, read N- to C-terminus: Tachykinin-4 (113 aa).

The N-terminal stretch at 1-20 (MLPCLALLLLMELSVCTVAG) is a signal peptide. Position 67 is a methionine amide (Met-67). Positions 71–79 (VGGRPLIQP) are excised as a propeptide. Leu-95 is subject to Leucine amide. A propeptide spanning residues 98–113 (RSLFTEGREDEAQGSE) is cleaved from the precursor.

The protein belongs to the tachykinin family. Expressed at low levels in the uterus of both pregnant and non-pregnant women. Isoform 1 is found only in the adrenal gland and fetal liver. Isoform 2 is found in heart, liver, bone marrow, prostate, adrenal gland and testis. Isoform 3 and isoform 4 are expressed predominantly in adrenal gland and placenta.

It localises to the secreted. Its function is as follows. Tachykinins are active peptides which excite neurons, evoke behavioral responses, are potent vasodilators and secretagogues, and contract (directly or indirectly) many smooth muscles. Endokinin-A induces thermal hyperalgesia and pain-related behavior such as scratching following intrathecal administration in rats. These effects are suppressed by treatment with endokinin-C. Endokinin-A/B reduces arterial blood pressure and increases sperm motility. This is Tachykinin-4 from Homo sapiens (Human).